The chain runs to 119 residues: Dihydroneopterin aldolase (119 aa).

Substrate-binding positions include Glu-21, Tyr-53, and Val-72–Glu-73. Lys-98 acts as the Proton donor/acceptor in catalysis.

It belongs to the DHNA family.

It catalyses the reaction 7,8-dihydroneopterin = 6-hydroxymethyl-7,8-dihydropterin + glycolaldehyde. It participates in cofactor biosynthesis; tetrahydrofolate biosynthesis; 2-amino-4-hydroxy-6-hydroxymethyl-7,8-dihydropteridine diphosphate from 7,8-dihydroneopterin triphosphate: step 3/4. In terms of biological role, catalyzes the conversion of 7,8-dihydroneopterin to 6-hydroxymethyl-7,8-dihydropterin. In Streptomyces coelicolor (strain ATCC BAA-471 / A3(2) / M145), this protein is Dihydroneopterin aldolase (folB).